Here is a 103-residue protein sequence, read N- to C-terminus: Large ribosomal subunit protein uL24 (103 aa).

The protein belongs to the universal ribosomal protein uL24 family. As to quaternary structure, part of the 50S ribosomal subunit.

In terms of biological role, one of two assembly initiator proteins, it binds directly to the 5'-end of the 23S rRNA, where it nucleates assembly of the 50S subunit. Functionally, one of the proteins that surrounds the polypeptide exit tunnel on the outside of the subunit. The protein is Large ribosomal subunit protein uL24 of Halalkalibacterium halodurans (strain ATCC BAA-125 / DSM 18197 / FERM 7344 / JCM 9153 / C-125) (Bacillus halodurans).